Reading from the N-terminus, the 1266-residue chain is MGTVIEGKLRFCIDRGGTFTDVYAEIPGHSDGHVLKLLSVDPSNYDDAPVEGIRRILEEYTGKKIPRTSKIPTDKIQWIRMGTTVATNALLERKGERIALCVTKGFKDLLQIGNQARPDIFDLTVAKPSNLYEEVIEVDERVVLALEDDDDDEGSLIKGVSGEFLRVVKPFDGEGLKPLLKGLLDKGISCLAVVLMHSYTYPKHEMDVEKLALEMGFRHVSLSSALTPMVRAVPRGLTATVDAYLTPVIKEYLSGFISKFDDDLGKVNVLFMQSDGGLAPESRFSGHKAVLSGPAGGVVGYSQTLFGLETEKPLIGFDMGGTSTDVSRYDGSYEQVIETQIAGTIIQAPQLDINTVAAGGGSKLKFQFGAFRVGPDSVGAHPGPVCYRKGGELAVTDANLVLGFVIPDYFPSIFGPNEDQPLDVAATREAFEKLAGQINIYRKSQDPSAKDMSVEEIAMGFVSVANETMCRPIRQLTEMKGHETKNHALACFGGAGPQHACAIARSLGMKEVLVHRYCGILSAYGMGLADVIEDAQEPYSAVYGPESLSEVFRRETVLLREVREKLQEQGFGDGNISTETYLNLRYDGTDTAIMVKGKKTGDGSAFDYAAEFLKLFEQEYGFKLQNRNLLICDVRVRGIGVTSILKPRAVEAAPVTPKVERHYKVYFEGGWHDTPLFKLENLGFGHEILGPAIIMNGNSTVIVEPQCKAIITKYGNIKIEVEPATSSVKLAENVADVVQLSIFNHRFMGIAEQMGRTLQRTSISTNIKERLDFSCALFSPDGGLVANAPHVPVHLGAMSSTVRWQLKHWGENLNEGDVLVTNHPCAGGSHLPDITVITPVFDKGKLVFFVASRGHHAEVGGITPGSMPPFSKAIWEEGAAIKAFKVVEKGVFQEEGIVKLLQFPSSDETTTKIPGTRRIQDNLSDLQAQIAANQRGISLIKELIEQYGLGTVQAYMKYVQLNAEEAVREMLKSVANRVSSETPNSRVGNSVTIEEEDYMDDGSIIHLKLTIDADKGEASFDFTGTSPEVYGNWNAPEAVTSAAVIYCLRCLVNVDIPLNQGCLAPVEIRIPAGSFLSPSEKAAVVGGNVLTSQRVTDVVLTAFQACACSQGCMNNLTFGDDTFGYYETIGGGCGAGPTWNGTSGVQCHMTNTRMTDPEIFEQRYPVLLHRFGLRENSGGNGLHKGGDGLVREIEFRKPVVVSILSERRVHSPRGLNGGQNGLRGANYLITKDKRRIYLGGKNTVHVEAGEILQILTPGGGGFGSNI.

Belongs to the oxoprolinase family. Expressed in roots, stems, leaves, flowers and siliques.

The protein localises to the cytoplasm. The enzyme catalyses 5-oxo-L-proline + ATP + 2 H2O = L-glutamate + ADP + phosphate + H(+). In terms of biological role, catalyzes the cleavage of 5-oxo-L-proline to form L-glutamate coupled to the hydrolysis of ATP to ADP and inorganic phosphate. Acts in the glutathione degradation pathway. The protein is 5-oxoprolinase 1 of Arabidopsis thaliana (Mouse-ear cress).